The chain runs to 128 residues: Small ribosomal subunit protein uS11 (128 aa).

The protein belongs to the universal ribosomal protein uS11 family. As to quaternary structure, part of the 30S ribosomal subunit. Interacts with proteins S7 and S18. Binds to IF-3.

Its function is as follows. Located on the platform of the 30S subunit, it bridges several disparate RNA helices of the 16S rRNA. Forms part of the Shine-Dalgarno cleft in the 70S ribosome. This Methylococcus capsulatus (strain ATCC 33009 / NCIMB 11132 / Bath) protein is Small ribosomal subunit protein uS11.